A 406-amino-acid chain; its full sequence is Argininosuccinate synthase (406 aa).

Residues 13-21 (AYSGGLDTS) and Ala-40 contribute to the ATP site. 2 residues coordinate L-citrulline: Tyr-91 and Ser-96. Gly-121 contacts ATP. L-aspartate contacts are provided by Thr-123, Asn-127, and Asp-128. Position 127 (Asn-127) interacts with L-citrulline. Residues Arg-131, Ser-182, Ser-191, Glu-267, and Tyr-279 each coordinate L-citrulline.

It belongs to the argininosuccinate synthase family. Type 1 subfamily. Homotetramer.

The protein localises to the cytoplasm. The catalysed reaction is L-citrulline + L-aspartate + ATP = 2-(N(omega)-L-arginino)succinate + AMP + diphosphate + H(+). Its pathway is amino-acid biosynthesis; L-arginine biosynthesis; L-arginine from L-ornithine and carbamoyl phosphate: step 2/3. This Brucella suis biovar 1 (strain 1330) protein is Argininosuccinate synthase.